The sequence spans 260 residues: Hydroxyacylglutathione hydrolase (260 aa).

7 residues coordinate Zn(2+): histidine 61, histidine 63, aspartate 65, histidine 66, histidine 119, aspartate 138, and histidine 176.

The protein belongs to the metallo-beta-lactamase superfamily. Glyoxalase II family. Monomer. Zn(2+) serves as cofactor.

It carries out the reaction an S-(2-hydroxyacyl)glutathione + H2O = a 2-hydroxy carboxylate + glutathione + H(+). It participates in secondary metabolite metabolism; methylglyoxal degradation; (R)-lactate from methylglyoxal: step 2/2. Functionally, thiolesterase that catalyzes the hydrolysis of S-D-lactoyl-glutathione to form glutathione and D-lactic acid. This is Hydroxyacylglutathione hydrolase from Brucella suis (strain ATCC 23445 / NCTC 10510).